Reading from the N-terminus, the 166-residue chain is Small ribosomal subunit protein uS5 (166 aa).

One can recognise an S5 DRBM domain in the interval 11–74; sequence LQEKLIAVNR…EKARRNMINV (64 aa).

This sequence belongs to the universal ribosomal protein uS5 family. As to quaternary structure, part of the 30S ribosomal subunit. Contacts proteins S4 and S8.

With S4 and S12 plays an important role in translational accuracy. In terms of biological role, located at the back of the 30S subunit body where it stabilizes the conformation of the head with respect to the body. This is Small ribosomal subunit protein uS5 from Pasteurella multocida (strain Pm70).